The sequence spans 387 residues: Anhydro-N-acetylmuramic acid kinase (387 aa).

17–24 (GTSMDGVD) serves as a coordination point for ATP.

Belongs to the anhydro-N-acetylmuramic acid kinase family.

It carries out the reaction 1,6-anhydro-N-acetyl-beta-muramate + ATP + H2O = N-acetyl-D-muramate 6-phosphate + ADP + H(+). It participates in amino-sugar metabolism; 1,6-anhydro-N-acetylmuramate degradation. It functions in the pathway cell wall biogenesis; peptidoglycan recycling. Its function is as follows. Catalyzes the specific phosphorylation of 1,6-anhydro-N-acetylmuramic acid (anhMurNAc) with the simultaneous cleavage of the 1,6-anhydro ring, generating MurNAc-6-P. Is required for the utilization of anhMurNAc either imported from the medium or derived from its own cell wall murein, and thus plays a role in cell wall recycling. In Burkholderia mallei (strain ATCC 23344), this protein is Anhydro-N-acetylmuramic acid kinase.